Here is a 445-residue protein sequence, read N- to C-terminus: Elongation factor 1-alpha (445 aa).

In terms of domain architecture, tr-type G spans 5–230; it reads KVHISLVVIG…DNLEPPKRPS (226 aa). The G1 stretch occupies residues 14-21; the sequence is GHVDSGKS. Residue 14-21 participates in GTP binding; it reads GHVDSGKS. Lys-55 is subject to N6,N6-dimethyllysine. Residues 70 to 74 are G2; the sequence is CITID. Position 79 is an N6,N6,N6-trimethyllysine (Lys-79). Residues 91-94 form a G3 region; that stretch reads DAPG. Residues 91–95 and 153–156 each bind GTP; these read DAPGH and NKFD. Residues 153–156 are G4; that stretch reads NKFD. Lys-187 is modified (N6,N6,N6-trimethyllysine). Positions 194-196 are G5; sequence SGW. Lys-261 is subject to N6-methyllysine. An N6,N6,N6-trimethyllysine mark is found at Lys-306 and Lys-396.

Belongs to the TRAFAC class translation factor GTPase superfamily. Classic translation factor GTPase family. EF-Tu/EF-1A subfamily.

Its subcellular location is the cytoplasm. This protein promotes the GTP-dependent binding of aminoacyl-tRNA to the A-site of ribosomes during protein biosynthesis. This is Elongation factor 1-alpha (TEF) from Euglena gracilis.